Reading from the N-terminus, the 482-residue chain is tRNA sulfurtransferase (482 aa).

One can recognise a THUMP domain in the interval 61 to 165 (KETLEVLTQT…NDKLNQVIER (105 aa)). ATP-binding positions include 183-184 (LI), K265, G287, and Q296. C344 and C456 are joined by a disulfide. Residues 404–482 (VAEHAVVLDI…GFHNVKVYRP (79 aa)) form the Rhodanese domain. C456 (cysteine persulfide intermediate) is an active-site residue.

It belongs to the ThiI family.

The protein resides in the cytoplasm. It catalyses the reaction [ThiI sulfur-carrier protein]-S-sulfanyl-L-cysteine + a uridine in tRNA + 2 reduced [2Fe-2S]-[ferredoxin] + ATP + H(+) = [ThiI sulfur-carrier protein]-L-cysteine + a 4-thiouridine in tRNA + 2 oxidized [2Fe-2S]-[ferredoxin] + AMP + diphosphate. The catalysed reaction is [ThiS sulfur-carrier protein]-C-terminal Gly-Gly-AMP + S-sulfanyl-L-cysteinyl-[cysteine desulfurase] + AH2 = [ThiS sulfur-carrier protein]-C-terminal-Gly-aminoethanethioate + L-cysteinyl-[cysteine desulfurase] + A + AMP + 2 H(+). It functions in the pathway cofactor biosynthesis; thiamine diphosphate biosynthesis. In terms of biological role, catalyzes the ATP-dependent transfer of a sulfur to tRNA to produce 4-thiouridine in position 8 of tRNAs, which functions as a near-UV photosensor. Also catalyzes the transfer of sulfur to the sulfur carrier protein ThiS, forming ThiS-thiocarboxylate. This is a step in the synthesis of thiazole, in the thiamine biosynthesis pathway. The sulfur is donated as persulfide by IscS. In Vibrio atlanticus (strain LGP32) (Vibrio splendidus (strain Mel32)), this protein is tRNA sulfurtransferase.